The primary structure comprises 324 residues: Methenyltetrahydromethanopterin cyclohydrolase (324 aa).

The protein belongs to the MCH family.

The protein resides in the cytoplasm. It carries out the reaction 5,10-methenyl-5,6,7,8-tetrahydromethanopterin + H2O = N(5)-formyl-5,6,7,8-tetrahydromethanopterin + H(+). Its pathway is one-carbon metabolism; formaldehyde degradation; formate from formaldehyde (H(4)MPT route): step 3/5. Functionally, catalyzes the hydrolysis of methenyl-H(4)MPT(+) to 5-formyl-H(4)MPT. The protein is Methenyltetrahydromethanopterin cyclohydrolase of Methylobacterium nodulans (strain LMG 21967 / CNCM I-2342 / ORS 2060).